A 128-amino-acid chain; its full sequence is 3-aminoacrylate deaminase RutC (128 aa).

It belongs to the RutC family. Homotrimer.

It catalyses the reaction (Z)-3-aminoacrylate + H2O + H(+) = 3-oxopropanoate + NH4(+). Its function is as follows. Involved in pyrimidine catabolism. Catalyzes the deamination of 3-aminoacrylate to malonic semialdehyde, a reaction that can also occur spontaneously. RutC may facilitate the reaction and modulate the metabolic fitness, rather than catalyzing essential functions. The polypeptide is 3-aminoacrylate deaminase RutC (Escherichia coli O111:H- (strain 11128 / EHEC)).